The following is a 401-amino-acid chain: Argininosuccinate synthase (401 aa).

Residue 9-17 (AYSGGLDTS) participates in ATP binding. An L-citrulline-binding site is contributed by Tyr86. ATP is bound at residue Gly116. Thr118, Asn122, and Asp123 together coordinate L-aspartate. An L-citrulline-binding site is contributed by Asn122. Residues Arg126, Ser174, Ser183, Glu259, and Tyr271 each contribute to the L-citrulline site.

Belongs to the argininosuccinate synthase family. Type 1 subfamily. Homotetramer.

The protein localises to the cytoplasm. It carries out the reaction L-citrulline + L-aspartate + ATP = 2-(N(omega)-L-arginino)succinate + AMP + diphosphate + H(+). Its pathway is amino-acid biosynthesis; L-arginine biosynthesis; L-arginine from L-ornithine and carbamoyl phosphate: step 2/3. The chain is Argininosuccinate synthase from Bacillus cytotoxicus (strain DSM 22905 / CIP 110041 / 391-98 / NVH 391-98).